The following is an 81-amino-acid chain: Cytochrome b559 subunit alpha (81 aa).

A helical membrane pass occupies residues 21–35 (IIHSITIPMLFIAGW). H23 contacts heme.

Belongs to the PsbE/PsbF family. In terms of assembly, heterodimer of an alpha subunit and a beta subunit. PSII is composed of 1 copy each of membrane proteins PsbA, PsbB, PsbC, PsbD, PsbE, PsbF, PsbH, PsbI, PsbJ, PsbK, PsbL, PsbM, PsbT, PsbX, PsbY, PsbZ, Psb30/Ycf12, peripheral proteins PsbO, CyanoQ (PsbQ), PsbU, PsbV and a large number of cofactors. It forms dimeric complexes. Heme b is required as a cofactor.

Its subcellular location is the cellular thylakoid membrane. Its function is as follows. This b-type cytochrome is tightly associated with the reaction center of photosystem II (PSII). PSII is a light-driven water:plastoquinone oxidoreductase that uses light energy to abstract electrons from H(2)O, generating O(2) and a proton gradient subsequently used for ATP formation. It consists of a core antenna complex that captures photons, and an electron transfer chain that converts photonic excitation into a charge separation. The polypeptide is Cytochrome b559 subunit alpha (Microcystis aeruginosa (strain NIES-843 / IAM M-2473)).